Consider the following 113-residue polypeptide: T cell receptor alpha variable 8-6 (113 aa).

An N-terminal signal peptide occupies residues 1–20 (MLLLLVPAFQVIFTLGGTRA). The Ig-like domain occupies 21-113 (QSVTQLDSQV…DTAEYFCAVS (93 aa)). Cys42 and Cys110 form a disulfide bridge. N-linked (GlcNAc...) asparagine glycosylation is found at Asn43 and Asn87.

As to quaternary structure, alpha-beta TR is a heterodimer composed of an alpha and beta chain; disulfide-linked. The alpha-beta TR is associated with the transmembrane signaling CD3 coreceptor proteins to form the TR-CD3 (TcR or TCR). The assembly of alpha-beta TR heterodimers with CD3 occurs in the endoplasmic reticulum where a single alpha-beta TR heterodimer associates with one CD3D-CD3E heterodimer, one CD3G-CD3E heterodimer and one CD247 homodimer forming a stable octameric structure. CD3D-CD3E and CD3G-CD3E heterodimers preferentially associate with TR alpha and TR beta chains, respectively. The association of the CD247 homodimer is the last step of TcR assembly in the endoplasmic reticulum and is required for transport to the cell surface.

The protein localises to the cell membrane. Its function is as follows. V region of the variable domain of T cell receptor (TR) alpha chain that participates in the antigen recognition. Alpha-beta T cell receptors are antigen specific receptors which are essential to the immune response and are present on the cell surface of T lymphocytes. Recognize peptide-major histocompatibility (MH) (pMH) complexes that are displayed by antigen presenting cells (APC), a prerequisite for efficient T cell adaptive immunity against pathogens. Binding of alpha-beta TR to pMH complex initiates TR-CD3 clustering on the cell surface and intracellular activation of LCK that phosphorylates the ITAM motifs of CD3G, CD3D, CD3E and CD247 enabling the recruitment of ZAP70. In turn ZAP70 phosphorylates LAT, which recruits numerous signaling molecules to form the LAT signalosome. The LAT signalosome propagates signal branching to three major signaling pathways, the calcium, the mitogen-activated protein kinase (MAPK) kinase and the nuclear factor NF-kappa-B (NF-kB) pathways, leading to the mobilization of transcription factors that are critical for gene expression and essential for T cell growth and differentiation. The T cell repertoire is generated in the thymus, by V-(D)-J rearrangement. This repertoire is then shaped by intrathymic selection events to generate a peripheral T cell pool of self-MH restricted, non-autoaggressive T cells. Post-thymic interaction of alpha-beta TR with the pMH complexes shapes TR structural and functional avidity. This Homo sapiens (Human) protein is T cell receptor alpha variable 8-6.